The primary structure comprises 175 residues: Large ribosomal subunit protein uL16 (175 aa).

This sequence belongs to the universal ribosomal protein uL16 family.

In Metallosphaera sedula (strain ATCC 51363 / DSM 5348 / JCM 9185 / NBRC 15509 / TH2), this protein is Large ribosomal subunit protein uL16.